The sequence spans 178 residues: Endoribonuclease YbeY (178 aa).

Zn(2+)-binding residues include H118, H122, and H128.

The protein belongs to the endoribonuclease YbeY family. The cofactor is Zn(2+).

Its subcellular location is the cytoplasm. Single strand-specific metallo-endoribonuclease involved in late-stage 70S ribosome quality control and in maturation of the 3' terminus of the 16S rRNA. The polypeptide is Endoribonuclease YbeY (Mycobacterium leprae (strain Br4923)).